The sequence spans 518 residues: Cytochrome P450 monooxygenase ARMGADRAFT_1018417 (518 aa).

The helical transmembrane segment at L3 to L23 threads the bilayer. C433 is a binding site for heme. N-linked (GlcNAc...) asparagine glycosylation is present at N455.

This sequence belongs to the cytochrome P450 family. Requires heme as cofactor.

It is found in the membrane. It participates in secondary metabolite biosynthesis. Functionally, cytochrome P450 monooxygenase, part of the gene cluster that mediates the biosynthesis of melleolides, a range of antifungal and phytotoxic polyketide derivatives composed of an orsellinic acid (OA) moiety esterified to various sesquiterpene alcohols. The first step in melleolides biosynthesis is performed by the delta(6)-protoilludene synthase PRO1 which catalyzes the cyclization of farnesyl diphosphate to protoilludene. The orsellinic acid synthase armB produces OA by condensing acetyl-CoA with 3 malonyl-CoA units in a three-round chain elongation reaction folowed by a C2-C7 ring closure. ArmB further catalyzes the trans-esterification of OA to the various sesquiterpene alcohols resulting from the hydroxylation of protoilludene. The melleolides cluster also includes 5 cytochrome P450 monooxygenases, 4 NAD(+)-dependent oxidoreductases, one flavin-dependent oxidoreductase, and one O-methyltransferase. The cytochrome P450 monooxygenases may be involved in protoilludene hydroxylation to elaborate melleolides with multiple alcohol groups, such as melleolide D, which carries alcohol functionalities at C-4, C-5, C-10, and C-13. The role of the NAD(+)-dependent enzymes remains unknown. Numerous melleolides, including arnamial, show 5'-O-methylation of the aromatic moiety which may be catalyzed by the methyltransferase encoded in the cluster. The flavin-dependent oxidoreductase might represent the dehydrogenase yielding the aldehyde in position 1 of arnamial and other melleolides. Finally, several halogenase localized outside of the cluster, are able to catalyze the transfer of a single chlorine atom to the melleolide backbone, resulting in a 6'-chloromelleolide product. In Armillaria gallica (Bulbous honey fungus), this protein is Cytochrome P450 monooxygenase ARMGADRAFT_1018417.